The primary structure comprises 305 residues: UDP-3-O-acyl-N-acetylglucosamine deacetylase (305 aa).

Zn(2+) contacts are provided by His-78, His-237, and Asp-241. The Proton donor role is filled by His-264.

The protein belongs to the LpxC family. Zn(2+) serves as cofactor.

It catalyses the reaction a UDP-3-O-[(3R)-3-hydroxyacyl]-N-acetyl-alpha-D-glucosamine + H2O = a UDP-3-O-[(3R)-3-hydroxyacyl]-alpha-D-glucosamine + acetate. It participates in glycolipid biosynthesis; lipid IV(A) biosynthesis; lipid IV(A) from (3R)-3-hydroxytetradecanoyl-[acyl-carrier-protein] and UDP-N-acetyl-alpha-D-glucosamine: step 2/6. Catalyzes the hydrolysis of UDP-3-O-myristoyl-N-acetylglucosamine to form UDP-3-O-myristoylglucosamine and acetate, the committed step in lipid A biosynthesis. The polypeptide is UDP-3-O-acyl-N-acetylglucosamine deacetylase (Paraburkholderia phymatum (strain DSM 17167 / CIP 108236 / LMG 21445 / STM815) (Burkholderia phymatum)).